A 393-amino-acid polypeptide reads, in one-letter code: Lipid-A-disaccharide synthase (393 aa).

This sequence belongs to the LpxB family.

The enzyme catalyses a lipid X + a UDP-2-N,3-O-bis[(3R)-3-hydroxyacyl]-alpha-D-glucosamine = a lipid A disaccharide + UDP + H(+). It functions in the pathway bacterial outer membrane biogenesis; LPS lipid A biosynthesis. Its function is as follows. Condensation of UDP-2,3-diacylglucosamine and 2,3-diacylglucosamine-1-phosphate to form lipid A disaccharide, a precursor of lipid A, a phosphorylated glycolipid that anchors the lipopolysaccharide to the outer membrane of the cell. The protein is Lipid-A-disaccharide synthase of Bordetella petrii (strain ATCC BAA-461 / DSM 12804 / CCUG 43448).